The primary structure comprises 146 residues: Probable glycine cleavage system H protein 3 (146 aa).

A Lipoyl-binding domain is found at 29 to 111; that stretch reads VVSVGMTDLG…PYGSWIIKVS (83 aa). Lys-71 bears the N6-lipoyllysine mark.

This sequence belongs to the GcvH family. The glycine cleavage system is composed of four proteins: P, T, L and H. (R)-lipoate is required as a cofactor.

In terms of biological role, the glycine cleavage system catalyzes the degradation of glycine. The H protein shuttles the methylamine group of glycine from the P protein to the T protein. This Sulfolobus acidocaldarius (strain ATCC 33909 / DSM 639 / JCM 8929 / NBRC 15157 / NCIMB 11770) protein is Probable glycine cleavage system H protein 3.